Reading from the N-terminus, the 41-residue chain is Giant hemoglobin AI chain (41 aa).

A Globin domain is found at Asp-2–Pro-41.

It belongs to the globin family. As to quaternary structure, giant hemoglobin is composed of four heme-containing chains (AI to AIV), and two linker chains (AV and AVI).

This chain is Giant hemoglobin AI chain, found in Lamellibrachia sp. (Deep-sea giant tube worm).